The sequence spans 119 residues: Multidrug resistance protein EbrB (119 aa).

The next 4 helical transmembrane spans lie at 3–23 (GMIF…MLKL), 31–51 (LPAA…SFSL), 59–79 (AYAT…HFIF), and 81–101 (EPFN…VFLL).

This sequence belongs to the drug/metabolite transporter (DMT) superfamily. Small multidrug resistance (SMR) (TC 2.A.7.1) family. EbrA/EbrB subfamily. As to quaternary structure, the efflux pump is composed of EbrA and EbrB.

Its subcellular location is the cell membrane. Functionally, part of a multidrug efflux pump. Confers resistance to cationic lipophilic dyes such as ethidium bromide, acriflavine, pyronine Y and safranin O. The efflux is probably coupled to an influx of protons. In Bacillus licheniformis (strain ATCC 14580 / DSM 13 / JCM 2505 / CCUG 7422 / NBRC 12200 / NCIMB 9375 / NCTC 10341 / NRRL NRS-1264 / Gibson 46), this protein is Multidrug resistance protein EbrB (ebrB).